We begin with the raw amino-acid sequence, 449 residues long: Trigger factor (449 aa).

The PPIase FKBP-type domain occupies 173–258; sequence GDRVTVDFVG…LKKVEWPHLP (86 aa).

This sequence belongs to the FKBP-type PPIase family. Tig subfamily.

It is found in the cytoplasm. It carries out the reaction [protein]-peptidylproline (omega=180) = [protein]-peptidylproline (omega=0). Involved in protein export. Acts as a chaperone by maintaining the newly synthesized protein in an open conformation. Functions as a peptidyl-prolyl cis-trans isomerase. The polypeptide is Trigger factor (Burkholderia pseudomallei (strain 1710b)).